The chain runs to 176 residues: V-type proton ATPase 16 kDa proteolipid subunit (176 aa).

Residues 1 to 17 (MSVLLRSVTELCPVYSP) are Lumenal-facing. The helical transmembrane segment at 18 to 38 (FFGSMGITASIVFTVFGGAYG) threads the bilayer. Residues 39–62 (TAKSSVGISSVGVMKPEFIMRSLF) are Cytoplasmic-facing. The helical transmembrane segment at 63–83 (PVVFAGVIGLYGLIVCIVLFI) threads the bilayer. Residues 84–98 (NVNKSEYSLNRAFLD) are Lumenal-facing. A helical transmembrane segment spans residues 99–119 (LGAGLTCGLCGLASGMSIGIS). Residues 120 to 136 (GDCGVRGAAQQPKLFVS) lie on the Cytoplasmic side of the membrane. Residues 137–157 (MLICLIFSEALALYGFIVALI) traverse the membrane as a helical segment. At 158 to 176 (MAATGDNSCVATASTSSSS) the chain is on the lumenal side.

The protein belongs to the V-ATPase proteolipid subunit family. In terms of assembly, V-ATPase is a heteromultimeric enzyme composed of a peripheral catalytic V1 complex (main components: subunits A, B, C, D, E, and F) attached to an integral membrane V0 proton pore complex (main component: the proteolipid protein; which is present as a hexamer that forms the proton-conducting pore).

It is found in the vacuole membrane. Proton-conducting pore forming subunit of the membrane integral V0 complex of vacuolar ATPase. V-ATPase is responsible for acidifying a variety of intracellular compartments in eukaryotic cells. This chain is V-type proton ATPase 16 kDa proteolipid subunit (VMA3), found in Entamoeba dispar.